The following is a 739-amino-acid chain: MSQTKQTFSTELGGRPLTIEIGQLAKQANGAALIRYGETAVLATVVASKQPKDLDFFPLTVNYEEKLYAAGKIPGGFLKREGRPGENAILTSRLIDRPIRPLFPDGFRHDIQVATTVLSSDEDNSPEVAAMIGASIALSISDIPFDGPIAGVTIGRVNGEFIINPTMSQASESDIDLQVAGTKHAVNMVEAGAKEVSEQAMLEAILLGHDVIKELIAFQEEIVAAVGQEKFAYTVASFDETLVNRLKAEALAEVTTAVQVEEKQARDLAINEVISKYIDQYAADDSITEAQLAEVSGVLNKFVKTEVRRLITEDKVRPDGRGLAEIRPLDSEIGLLPRAHGSGLFTRGQTQVLSVATLGVAGDAQIIDGLGLKAEKRFMHHYNFPPFSVGEARPMRAPGRREIGHGALGERALLPVLPSETDFPYTIRLVSEVLESNGSSSQASICGSILAMMDAGVPLKAPVAGIAMGLIKEGENYSILTDIQGMEDHLGDMDFKVAGTKDGVTALQMDMKIGGITRQILEEALEQARLGRLHILEHMNSVIAEPRVELSKYAPKIVTLKINPDKIRDVIGPGGKVINGIIDETGVKIDIDQDGTVFIASTDQDGINHARQLIEDIVREVVIGEEFDGTVRRVEKFGAFVELFKGKDALVHISELALERVGQTEDVVKLGDKLKVRVTEVDDKGRVNASHKVLLVEGMSPEDRAAYDEKKKTERDSRPPRRDTGSRPPRDGQRPPRRN.

The Mg(2+) site is built by D488 and D494. A KH domain is found at 555–614 (PKIVTLKINPDKIRDVIGPGGKVINGIIDETGVKIDIDQDGTVFIASTDQDGINHARQLI). An S1 motif domain is found at 624–692 (GEEFDGTVRR…DKGRVNASHK (69 aa)). A disordered region spans residues 698–739 (GMSPEDRAAYDEKKKTERDSRPPRRDTGSRPPRDGQRPPRRN). Residues 701-739 (PEDRAAYDEKKKTERDSRPPRRDTGSRPPRDGQRPPRRN) show a composition bias toward basic and acidic residues.

Belongs to the polyribonucleotide nucleotidyltransferase family. Requires Mg(2+) as cofactor.

It localises to the cytoplasm. It carries out the reaction RNA(n+1) + phosphate = RNA(n) + a ribonucleoside 5'-diphosphate. Involved in mRNA degradation. Catalyzes the phosphorolysis of single-stranded polyribonucleotides processively in the 3'- to 5'-direction. The sequence is that of Polyribonucleotide nucleotidyltransferase from Exiguobacterium sibiricum (strain DSM 17290 / CCUG 55495 / CIP 109462 / JCM 13490 / 255-15).